Consider the following 685-residue polypeptide: Multisite-specific tRNA:(cytosine-C(5))-methyltransferase trm4b (685 aa).

Residues 167–173, D208, D235, and D270 each bind S-adenosyl-L-methionine; that span reads CAAPGSK. The active-site Nucleophile is the C323.

It belongs to the class I-like SAM-binding methyltransferase superfamily. RsmB/NOP family. TRM4 subfamily.

It is found in the nucleus. It carries out the reaction cytidine(49) in tRNA precursor + S-adenosyl-L-methionine = 5-methylcytidine(49) in tRNA precursor + S-adenosyl-L-homocysteine + H(+). The catalysed reaction is cytidine(50) in tRNA + S-adenosyl-L-methionine = 5-methylcytidine(50) in tRNA + S-adenosyl-L-homocysteine + H(+). It catalyses the reaction cytidine(60) in tRNA(Asp) + S-adenosyl-L-methionine = 5-methylcytidine(60) in tRNA(Asp) + S-adenosyl-L-homocysteine + H(+). The enzyme catalyses cytidine(61) in tRNA(Asp) + S-adenosyl-L-methionine = 5-methylcytidine(61) in tRNA(Asp) + S-adenosyl-L-homocysteine + H(+). It carries out the reaction cytidine(62) in tRNA(Asp) + S-adenosyl-L-methionine = 5-methylcytidine(62) in tRNA(Asp) + S-adenosyl-L-homocysteine + H(+). In terms of biological role, tRNA cytosine C(5)-methyltransferase that methylates cytosine to 5-methylcytosine (m5C) in tRNAs at position 49 and 50. Trm4a and trm4b methylate different sets of tRNAs. Also methylates cytosine to m5C at positions (60, 61 and 62) in tRNA(Asp). The chain is Multisite-specific tRNA:(cytosine-C(5))-methyltransferase trm4b from Schizosaccharomyces pombe (strain 972 / ATCC 24843) (Fission yeast).